Here is a 357-residue protein sequence, read N- to C-terminus: Neurogenic differentiation factor 1 (357 aa).

Residues 1–94 (MTKSYSESGL…GPKKKKMTKA (94 aa)) form a disordered region. Acidic residues predominate over residues 58–78 (EEEDEDEDLEEEEEEEEEEDD). Over residues 81-93 (PKRRGPKKKKMTK) the composition is skewed to basic residues. Residues 87–93 (KKKKMTK) carry the Nuclear localization signal motif. In terms of domain architecture, bHLH spans 101-153 (LRRMKANARERNRMHGLNAALDNLRKVVPCYSKTQKLSKIETLRLAKNYIWAL). A phosphoserine mark is found at serine 162, serine 259, serine 266, and serine 274. A Phosphoserine; by CaMK2 modification is found at serine 336.

As to quaternary structure, efficient DNA-binding requires dimerization with another bHLH protein. Heterodimer with TCF3/E47; the heterodimer is inhibited in presence of ID2, but not NR0B2, to E-box element. Interacts with EP300; the interaction is inhibited by NR0B2. Interacts with RREB1. Interacts with ATOH8. Phosphorylated by MAPK1; phosphorylation regulates heterodimerization and DNA-binding activities. Phosphorylation on Ser-266 and Ser-274 increases transactivation on the insulin promoter in glucose-stimulated insulinoma cells. Phosphorylated. In islet cells, phosphorylated on Ser-274 upon glucose stimulation; which may be required for nuclear localization. In activated neurons, phosphorylated on Ser-336 by CaMK2; which promotes dendritic growth.

The protein localises to the cytoplasm. Its subcellular location is the nucleus. Acts as a transcriptional activator: mediates transcriptional activation by binding to E box-containing promoter consensus core sequences 5'-CANNTG-3'. Associates with the p300/CBP transcription coactivator complex to stimulate transcription of the secretin gene as well as the gene encoding the cyclin-dependent kinase inhibitor CDKN1A. Contributes to the regulation of several cell differentiation pathways, like those that promote the formation of early retinal ganglion cells, inner ear sensory neurons, granule cells forming either the cerebellum or the dentate gyrus cell layer of the hippocampus, endocrine islet cells of the pancreas and enteroendocrine cells of the small intestine. Together with PAX6 or SIX3, is required for the regulation of amacrine cell fate specification. Also required for dendrite morphogenesis and maintenance in the cerebellar cortex. Associates with chromatin to enhancer regulatory elements in genes encoding key transcriptional regulators of neurogenesis. This Rattus norvegicus (Rat) protein is Neurogenic differentiation factor 1 (Neurod1).